We begin with the raw amino-acid sequence, 860 residues long: Leucine--tRNA ligase (860 aa).

The 'HIGH' region signature appears at 42–52; sequence PYPSGRLHMGH. Positions 619–623 match the 'KMSKS' region motif; that stretch reads KMSKS. Lys-622 lines the ATP pocket.

This sequence belongs to the class-I aminoacyl-tRNA synthetase family.

Its subcellular location is the cytoplasm. It catalyses the reaction tRNA(Leu) + L-leucine + ATP = L-leucyl-tRNA(Leu) + AMP + diphosphate. This Escherichia coli O127:H6 (strain E2348/69 / EPEC) protein is Leucine--tRNA ligase.